A 37-amino-acid chain; its full sequence is Large ribosomal subunit protein bL36 (37 aa).

It belongs to the bacterial ribosomal protein bL36 family.

The polypeptide is Large ribosomal subunit protein bL36 (Marinomonas sp. (strain MWYL1)).